The primary structure comprises 452 residues: Growth/differentiation factor 6 (452 aa).

Residues 1–22 (MDTPRVLLWAIFLISFLWDLPG) form the signal peptide. The propeptide occupies 23-332 (FQQASISSSS…LPSPGRRRRR (310 aa)). The segment at 29–93 (SSSSSTELDS…QEPPGRGPRV (65 aa)) is disordered. Composition is skewed to basic and acidic residues over residues 37–46 (DSTKDVENRK) and 58–75 (AEGR…ELRR). An N-linked (GlcNAc...) asparagine glycan is attached at N115. Disordered regions lie at residues 244-267 (RDSG…LGFG) and 301-348 (AEAA…KKSR). The span at 301–317 (AEAAGAEGSWPAPSGAP) shows a compositional bias: low complexity. Residues 327-348 (GRRRRRTALSSRHGKRHGKKSR) are compositionally biased toward basic residues. Cystine bridges form between C351–C417, C380–C449, and C384–C451.

The protein belongs to the TGF-beta family. In terms of assembly, homodimer; disulfide-linked.

Its subcellular location is the secreted. Functionally, growth factor that controls proliferation and cellular differentiation in the retina and bone formation. Plays a key role in regulating apoptosis during retinal development. Establishes dorsal-ventral positional information in the retina and controls the formation of the retinotectal map. Required for normal formation of bones and joints in the limbs, skull, digits and axial skeleton. Plays a key role in establishing boundaries between skeletal elements during development. Regulation of GDF6 expression seems to be a mechanism for evolving species-specific changes in skeletal structures. Seems to positively regulate differentiation of chondrogenic tissue through the growth factor receptors subunits BMPR1A, BMPR1B, BMPR2 and ACVR2A, leading to the activation of SMAD1-SMAD5-SMAD8 complex. The regulation of chondrogenic differentiation is inhibited by NOG. Also involved in the induction of adipogenesis from mesenchymal stem cells. This mechanism acts through the growth factor receptors subunits BMPR1A, BMPR2 and ACVR2A and the activation of SMAD1-SMAD5-SMAD8 complex and MAPK14/p38. The protein is Growth/differentiation factor 6 (Gdf6) of Rattus norvegicus (Rat).